The primary structure comprises 657 residues: Probable Xaa-Pro aminopeptidase P (657 aa).

Mn(2+) contacts are provided by Asp453, Asp464, Glu562, and Glu576.

It belongs to the peptidase M24B family. The cofactor is Mn(2+).

It carries out the reaction Release of any N-terminal amino acid, including proline, that is linked to proline, even from a dipeptide or tripeptide.. Functionally, catalyzes the removal of a penultimate prolyl residue from the N-termini of peptides. This is Probable Xaa-Pro aminopeptidase P (ampp) from Talaromyces stipitatus (strain ATCC 10500 / CBS 375.48 / QM 6759 / NRRL 1006) (Penicillium stipitatum).